Reading from the N-terminus, the 197-residue chain is Endoribonuclease YbeY (197 aa).

3 residues coordinate Zn(2+): His-156, His-160, and His-166.

It belongs to the endoribonuclease YbeY family. It depends on Zn(2+) as a cofactor.

The protein resides in the cytoplasm. Its function is as follows. Single strand-specific metallo-endoribonuclease involved in late-stage 70S ribosome quality control and in maturation of the 3' terminus of the 16S rRNA. This Cupriavidus metallidurans (strain ATCC 43123 / DSM 2839 / NBRC 102507 / CH34) (Ralstonia metallidurans) protein is Endoribonuclease YbeY.